The chain runs to 504 residues: SPbeta prophage-derived uncharacterized protein YorI (504 aa).

The sequence is that of SPbeta prophage-derived uncharacterized protein YorI (yorI) from Bacillus subtilis (strain 168).